The primary structure comprises 296 residues: Protoheme IX farnesyltransferase (296 aa).

8 helical membrane passes run 8–28 (VTKPGIIMGNLISVAGGFFLA), 35–55 (WILMLATVIGLSLVVASGCAI), 84–104 (AAFFHGIVLGVIGFALLSYFT), 107–127 (VAVAFAAFGYVVYVGLYTMYF), 132–152 (VYGTFVGSLSGAVPPVVGYCA), 162–182 (AILLTMFCIWQMPHSYAIAIF), 215–235 (FAVVAALLPLTGYVGIGFMVV), and 264–284 (VFFFSIITVTALSVTMALDFN).

The protein belongs to the UbiA prenyltransferase family. Protoheme IX farnesyltransferase subfamily.

It is found in the cell inner membrane. The catalysed reaction is heme b + (2E,6E)-farnesyl diphosphate + H2O = Fe(II)-heme o + diphosphate. It functions in the pathway porphyrin-containing compound metabolism; heme O biosynthesis; heme O from protoheme: step 1/1. In terms of biological role, converts heme B (protoheme IX) to heme O by substitution of the vinyl group on carbon 2 of heme B porphyrin ring with a hydroxyethyl farnesyl side group. The sequence is that of Protoheme IX farnesyltransferase from Marinomonas sp. (strain MWYL1).